Reading from the N-terminus, the 434-residue chain is Methylenetetrahydrofolate--tRNA-(uracil-5-)-methyltransferase TrmFO (434 aa).

10-15 is an FAD binding site; sequence GAGLAG.

It belongs to the MnmG family. TrmFO subfamily. FAD serves as cofactor.

It localises to the cytoplasm. The enzyme catalyses uridine(54) in tRNA + (6R)-5,10-methylene-5,6,7,8-tetrahydrofolate + NADH + H(+) = 5-methyluridine(54) in tRNA + (6S)-5,6,7,8-tetrahydrofolate + NAD(+). It carries out the reaction uridine(54) in tRNA + (6R)-5,10-methylene-5,6,7,8-tetrahydrofolate + NADPH + H(+) = 5-methyluridine(54) in tRNA + (6S)-5,6,7,8-tetrahydrofolate + NADP(+). Its function is as follows. Catalyzes the folate-dependent formation of 5-methyl-uridine at position 54 (M-5-U54) in all tRNAs. The chain is Methylenetetrahydrofolate--tRNA-(uracil-5-)-methyltransferase TrmFO from Bacillus cereus (strain G9842).